We begin with the raw amino-acid sequence, 152 residues long: Large ribosomal subunit protein bL9 (152 aa).

The protein belongs to the bacterial ribosomal protein bL9 family.

Functionally, binds to the 23S rRNA. The polypeptide is Large ribosomal subunit protein bL9 (Coxiella burnetii (strain RSA 331 / Henzerling II)).